A 296-amino-acid polypeptide reads, in one-letter code: Maltose/maltodextrin transport system permease protein MalG (296 aa).

Topologically, residues 1-12 are cytoplasmic; sequence MAMVQGKSLKYR. Residues 13-35 traverse the membrane as a helical segment; the sequence is VWATHIAMWAFLALIIFPLLMII. Residues 36 to 88 are Periplasmic-facing; that stretch reads AISFREGNFATGSLIPDNPTLDHWKLALGFSITNADGTVTPPPFPVMTWLWNS. In terms of domain architecture, ABC transmembrane type-1 spans 85–281; the sequence is LWNSVKVGGI…VPITAVFLLA (197 aa). Residues 89 to 111 form a helical membrane-spanning segment; the sequence is VKVGGISAILIVALSTTSAYAFA. The Cytoplasmic portion of the chain corresponds to 112–123; that stretch reads RMKFKGKNTILK. A helical transmembrane segment spans residues 124–143; it reads AMMIFQMFPAVLALVALYAL. The Periplasmic portion of the chain corresponds to 144–152; it reads FDKLGQYIP. The chain crosses the membrane as a helical span at residues 153 to 175; the sequence is FLGLNTHGGLIFAYLGGIALHVW. Residues 176-204 are Cytoplasmic-facing; it reads TIKGYFESIDSSLEEAAALDGATPWQAFR. A helical transmembrane segment spans residues 205-227; the sequence is LVLLPLSVPILAVVFILSFIMVI. At 228-257 the chain is on the periplasmic side; that stretch reads GEVPVASLLLSDVDSYTLAVGMQQYLYPQN. Residues 258 to 280 form a helical membrane-spanning segment; sequence YLWGDFAAAAVLSAVPITAVFLL. The Cytoplasmic segment spans residues 281-296; it reads AQRWLVGGLTAGGVKG.

It belongs to the binding-protein-dependent transport system permease family. MalFG subfamily. In terms of assembly, the complex is composed of two ATP-binding proteins (MalK), two transmembrane proteins (MalG and MalF) and a solute-binding protein (MalE).

It localises to the cell inner membrane. Functionally, part of the ABC transporter complex MalEFGK involved in maltose/maltodextrin import. Probably responsible for the translocation of the substrate across the membrane. In Vibrio parahaemolyticus serotype O3:K6 (strain RIMD 2210633), this protein is Maltose/maltodextrin transport system permease protein MalG (malG).